A 381-amino-acid chain; its full sequence is 6-oxocyclohex-1-ene-1-carbonyl-CoA hydrolase (381 aa).

The protein belongs to the enoyl-CoA hydratase/isomerase family. As to quaternary structure, homohexamer.

It catalyses the reaction 6-oxocyclohex-1-ene-1-carbonyl-CoA + 2 H2O = 3-hydroxy-6-carboxyhexanoyl-CoA + H(+). It functions in the pathway aromatic compound metabolism; benzoyl-CoA degradation. Functionally, involved in the central benzoyl-CoA catabolism. Catalyzes the addition of one molecule of water to the double bond and the hydrolytic cleavage of C-C bond in the alicyclic ring, 6-oxocyclohex-1-ene-1-carbonyl-CoA (6-OCH-CoA) to yield 3-hydroxypimelyl-CoA. This is 6-oxocyclohex-1-ene-1-carbonyl-CoA hydrolase from Geobacter metallireducens (strain ATCC 53774 / DSM 7210 / GS-15).